A 97-amino-acid polypeptide reads, in one-letter code: Cell division topological specificity factor (97 aa).

It belongs to the MinE family.

In terms of biological role, prevents the cell division inhibition by proteins MinC and MinD at internal division sites while permitting inhibition at polar sites. This ensures cell division at the proper site by restricting the formation of a division septum at the midpoint of the long axis of the cell. This is Cell division topological specificity factor from Synechococcus sp. (strain RCC307).